We begin with the raw amino-acid sequence, 1083 residues long: Solute carrier family 12 member 7 (1083 aa).

A disordered region spans residues 1–55 (MPTNFTVVPVEARADGAGDEAAERTEEPESPESVDQTSPTPGDGNPRENSPFINN). At 1–119 (MPTNFTVVPV…RREVKAPRMG (119 aa)) the chain is on the cytoplasmic side. Over residues 12 to 27 (ARADGAGDEAAERTEE) the composition is skewed to basic and acidic residues. Phosphoserine is present on residues Ser30 and Ser33. Thr37 bears the Phosphothreonine mark. Phosphoserine occurs at positions 50 and 62. Residues 120–142 (TFIGVYLPCLQNILGVILFLRLT) traverse the membrane as a discontinuously helical segment. Residues Asn131 and Ile132 each contribute to the K(+) site. Residue Val135 coordinates chloride. At 143-149 (WIVGAAG) the chain is on the extracellular side. Residues 150–172 (VMESFLIVAMCCTCTMLTAISMS) traverse the membrane as a helical segment. Topologically, residues 173–196 (AIATNGVVPAGGSYYMISRSLGPE) are cytoplasmic. The helical transmembrane segment at 197 to 225 (FGGAVGLCFYLGTTFAGAMYILGTIEIFL) threads the bilayer. Residues 226–249 (TYISPSAAIFQAETADGEAAALLN) are Extracellular-facing. A run of 2 helical transmembrane segments spans residues 250 to 271 (NMRV…VGVK) and 272 to 300 (YVNK…KTAF). At 301–419 (APPDIPVCLL…PYVLTDIMTY (119 aa)) the chain is on the extracellular side. A glycan (N-linked (GlcNAc...) (high mannose) asparagine) is linked at Asn312. N-linked (GlcNAc...) (complex) asparagine glycosylation is found at Asn331 and Asn344. N-linked (GlcNAc...) (high mannose) asparagine glycosylation is present at Asn360. Residues 420 to 440 (FTMLVGIYFPSVTGIMAGSNR) form a helical membrane-spanning segment. 2 residues coordinate K(+): Pro429 and Thr432. Residue Pro429 coordinates chloride. Residues Gly433 and Ile434 each coordinate chloride. Residues 441–450 (SGDLKDAQKS) are Cytoplasmic-facing. Residues 451–473 (IPTGTILAIVTTSFIYLSCIVLF) form a helical membrane-spanning segment. The Extracellular segment spans residues 474-504 (GACIEGVVLRDKFGEALQGNLVIGMLAWPSP). The chain crosses the membrane as a helical span at residues 505–531 (WVIVIGSFFSTCGAGLQSLTGAPRLLQ). The Cytoplasmic segment spans residues 532–554 (AIARDGIIPFLQVFGHGKANGEP). 2 helical membrane-spanning segments follow: residues 555 to 573 (TWAL…LIAS) and 574 to 598 (LDSV…ACAV). A chloride-binding site is contributed by Tyr589. The Cytoplasmic portion of the chain corresponds to 599-612 (QTLLRTPNWRPRFK). Helical transmembrane passes span 613–635 (FYHW…ICSW) and 636–651 (YYAL…IYKY). Topologically, residues 652 to 1083 (IEYRGAEKEW…GGREVITIYS (432 aa)) are cytoplasmic. Positions 664-680 (GIRGLSLNAARYALLRV) are scissor helix. Thr973 and Thr980 each carry phosphothreonine.

It belongs to the SLC12A transporter family. K/Cl co-transporter subfamily. Homodimer; adopts a domain-swap conformation at the scissor helices connecting the transmembrane domain and C-terminal domain. Heterodimer with K-Cl cotransporter SLC12A5. Post-translationally, glycosylation at Asn-331 and Asn-344 is required for proper trafficking to the cell surface, and augments protein stability. In terms of tissue distribution, detected in proximal tubules in the kidney, in particular in basolateral membranes of intercalated cells in the cortical collecting duct.

The protein resides in the cell membrane. The catalysed reaction is K(+)(in) + chloride(in) = K(+)(out) + chloride(out). With respect to regulation, activated by N-ethylmaleimide (NEM). Inhibited by furosemide, DIDS and bumetanide. The inhibition is much stronger in the presence of 50 mM K(+) in the uptake medium. Inhibited by DIOA. Inhibited by WNK3. Functionally, mediates electroneutral potassium-chloride cotransport when activated by cell swelling. May mediate K(+) uptake into Deiters' cells in the cochlea and contribute to K(+) recycling in the inner ear. Important for the survival of cochlear outer and inner hair cells and the maintenance of the organ of Corti. May be required for basolateral Cl(-) extrusion in the kidney and contribute to renal acidification. This chain is Solute carrier family 12 member 7 (Slc12a7), found in Mus musculus (Mouse).